Consider the following 105-residue polypeptide: UPF0148 protein PH0795 (105 aa).

This sequence belongs to the UPF0148 family.

The sequence is that of UPF0148 protein PH0795 from Pyrococcus horikoshii (strain ATCC 700860 / DSM 12428 / JCM 9974 / NBRC 100139 / OT-3).